Reading from the N-terminus, the 464-residue chain is ATP-dependent protease ATPase subunit HslU (464 aa).

ATP is bound by residues I19, 61-66, D277, E342, and R414; that span reads GVGKTE.

It belongs to the ClpX chaperone family. HslU subfamily. As to quaternary structure, a double ring-shaped homohexamer of HslV is capped on each side by a ring-shaped HslU homohexamer. The assembly of the HslU/HslV complex is dependent on binding of ATP.

It localises to the cytoplasm. Functionally, ATPase subunit of a proteasome-like degradation complex; this subunit has chaperone activity. The binding of ATP and its subsequent hydrolysis by HslU are essential for unfolding of protein substrates subsequently hydrolyzed by HslV. HslU recognizes the N-terminal part of its protein substrates and unfolds these before they are guided to HslV for hydrolysis. The chain is ATP-dependent protease ATPase subunit HslU from Lactobacillus gasseri (strain ATCC 33323 / DSM 20243 / BCRC 14619 / CIP 102991 / JCM 1131 / KCTC 3163 / NCIMB 11718 / NCTC 13722 / AM63).